A 98-amino-acid polypeptide reads, in one-letter code: MNAHDIIIRPVITEKNTALMEEGKYTFEVAQEANKPMIKAAVQQIFNVNVKAVNTMNVKGKLKVRRTRNGQQSGYSRSWKKAIVTLAPGERIEIFEDL.

Belongs to the universal ribosomal protein uL23 family. Part of the 50S ribosomal subunit. Contacts protein L29, and trigger factor when it is bound to the ribosome.

In terms of biological role, one of the early assembly proteins it binds 23S rRNA. One of the proteins that surrounds the polypeptide exit tunnel on the outside of the ribosome. Forms the main docking site for trigger factor binding to the ribosome. In Herpetosiphon aurantiacus (strain ATCC 23779 / DSM 785 / 114-95), this protein is Large ribosomal subunit protein uL23.